The following is a 229-amino-acid chain: Flagellar brake protein YcgR (229 aa).

The 85-residue stretch at 134 to 218 (QLSLRVLDVS…GERALQRYID (85 aa)) folds into the PilZ domain.

This sequence belongs to the YcgR family. In terms of assembly, monomer. Interacts with the flagellar basal bodies.

It is found in the bacterial flagellum basal body. Acts as a flagellar brake, regulating swimming and swarming in a bis-(3'-5') cyclic diguanylic acid (c-di-GMP)-dependent manner. Binds 1 c-di-GMP dimer per subunit. Increasing levels of c-di-GMP lead to decreased motility. In Methylibium petroleiphilum (strain ATCC BAA-1232 / LMG 22953 / PM1), this protein is Flagellar brake protein YcgR.